A 503-amino-acid polypeptide reads, in one-letter code: uncharacterized protein (503 aa).

This sequence belongs to the Mg-chelatase subunits D/I family. ComM subfamily.

This is an uncharacterized protein from Mycobacterium bovis (strain ATCC BAA-935 / AF2122/97).